A 301-amino-acid chain; its full sequence is Galectin-6 (301 aa).

Galectin domains lie at 19-149 (YKRP…INFF) and 173-301 (YVGA…YVHI).

This chain is Galectin-6 (Lgals6), found in Mus musculus (Mouse).